The sequence spans 100 residues: Urease subunit gamma (100 aa).

It belongs to the urease gamma subunit family. As to quaternary structure, heterotrimer of UreA (gamma), UreB (beta) and UreC (alpha) subunits. Three heterotrimers associate to form the active enzyme.

It localises to the cytoplasm. The catalysed reaction is urea + 2 H2O + H(+) = hydrogencarbonate + 2 NH4(+). Its pathway is nitrogen metabolism; urea degradation; CO(2) and NH(3) from urea (urease route): step 1/1. This chain is Urease subunit gamma, found in Mycolicibacterium smegmatis (strain ATCC 700084 / mc(2)155) (Mycobacterium smegmatis).